Consider the following 495-residue polypeptide: Cobyric acid synthase (495 aa).

The GATase cobBQ-type domain occupies 253 to 446; that stretch reads KISIAIVYFP…FHGIFDGSAF (194 aa). C334 serves as the catalytic Nucleophile. The active site involves H438.

The protein belongs to the CobB/CobQ family. CobQ subfamily.

It participates in cofactor biosynthesis; adenosylcobalamin biosynthesis. Functionally, catalyzes amidations at positions B, D, E, and G on adenosylcobyrinic A,C-diamide. NH(2) groups are provided by glutamine, and one molecule of ATP is hydrogenolyzed for each amidation. The protein is Cobyric acid synthase of Chlorobium phaeobacteroides (strain BS1).